The chain runs to 330 residues: Ketol-acid reductoisomerase (NADP(+)) (330 aa).

The KARI N-terminal Rossmann domain maps to 1–181 (MNAYYEQDAD…GGTKAGVIET (181 aa)). NADP(+)-binding positions include 24 to 27 (YGSQ), Arg47, Ser50, Ser52, and 82 to 85 (DQYQ). The active site involves His107. Gly133 is an NADP(+) binding site. The region spanning 182 to 327 (TFKNETETDL…SKLRDMMSWL (146 aa)) is the KARI C-terminal knotted domain. Mg(2+)-binding residues include Asp190, Glu194, Glu226, and Glu230. Ser251 provides a ligand contact to substrate.

The protein belongs to the ketol-acid reductoisomerase family. It depends on Mg(2+) as a cofactor.

It catalyses the reaction (2R)-2,3-dihydroxy-3-methylbutanoate + NADP(+) = (2S)-2-acetolactate + NADPH + H(+). It carries out the reaction (2R,3R)-2,3-dihydroxy-3-methylpentanoate + NADP(+) = (S)-2-ethyl-2-hydroxy-3-oxobutanoate + NADPH + H(+). It functions in the pathway amino-acid biosynthesis; L-isoleucine biosynthesis; L-isoleucine from 2-oxobutanoate: step 2/4. It participates in amino-acid biosynthesis; L-valine biosynthesis; L-valine from pyruvate: step 2/4. Involved in the biosynthesis of branched-chain amino acids (BCAA). Catalyzes an alkyl-migration followed by a ketol-acid reduction of (S)-2-acetolactate (S2AL) to yield (R)-2,3-dihydroxy-isovalerate. In the isomerase reaction, S2AL is rearranged via a Mg-dependent methyl migration to produce 3-hydroxy-3-methyl-2-ketobutyrate (HMKB). In the reductase reaction, this 2-ketoacid undergoes a metal-dependent reduction by NADPH to yield (R)-2,3-dihydroxy-isovalerate. The chain is Ketol-acid reductoisomerase (NADP(+)) from Chlorobium limicola (strain DSM 245 / NBRC 103803 / 6330).